The primary structure comprises 930 residues: Translation initiation factor IF-2 (930 aa).

The tract at residues 51–325 (PGAGKSAAKP…TREIGGVKVP (275 aa)) is disordered. 2 stretches are compositionally biased toward low complexity: residues 56-111 (SAAK…KPGV) and 121-162 (TPAA…GNNP). Positions 263 to 295 (RPGGGPGGGPGRPGGPGGRGGRGNAQGAFGRGG) are enriched in gly residues. Residues 296 to 307 (GPRKGRKSKRAK) are compositionally biased toward basic residues. Basic and acidic residues predominate over residues 308 to 320 (RQEFEQQHTREIG). The region spanning 422–596 (PRPAVVTVMG…LTADAALELT (175 aa)) is the tr-type G domain. A G1 region spans residues 431-438 (GHVDHGKT). 431–438 (GHVDHGKT) contributes to the GTP binding site. Residues 456-460 (GITQH) are G2. The tract at residues 481–484 (DTPG) is G3. GTP is bound by residues 481–485 (DTPGH) and 535–538 (NKID). The G4 stretch occupies residues 535–538 (NKID). Residues 571-573 (SAR) form a G5 region.

This sequence belongs to the TRAFAC class translation factor GTPase superfamily. Classic translation factor GTPase family. IF-2 subfamily.

It localises to the cytoplasm. Its function is as follows. One of the essential components for the initiation of protein synthesis. Protects formylmethionyl-tRNA from spontaneous hydrolysis and promotes its binding to the 30S ribosomal subunits. Also involved in the hydrolysis of GTP during the formation of the 70S ribosomal complex. In Micrococcus luteus (strain ATCC 4698 / DSM 20030 / JCM 1464 / CCM 169 / CCUG 5858 / IAM 1056 / NBRC 3333 / NCIMB 9278 / NCTC 2665 / VKM Ac-2230) (Micrococcus lysodeikticus), this protein is Translation initiation factor IF-2.